The sequence spans 1002 residues: DNA-directed RNA polymerase 1, mitochondrial (1002 aa).

The transit peptide at 1–21 directs the protein to the mitochondrion; the sequence is MWRYISKQAYSRKFRNSHDSA. Catalysis depends on residues aspartate 703, lysine 778, and aspartate 935.

The protein belongs to the phage and mitochondrial RNA polymerase family. In terms of tissue distribution, the highest levels of expression are detected in the mature leaves. The level of expression is lowest in the cotyledons.

The protein localises to the mitochondrion. It catalyses the reaction RNA(n) + a ribonucleoside 5'-triphosphate = RNA(n+1) + diphosphate. Its function is as follows. DNA-dependent RNA polymerase catalyzes the transcription of DNA into RNA using the four ribonucleoside triphosphates as substrates. This chain is DNA-directed RNA polymerase 1, mitochondrial (RPOT1), found in Nicotiana sylvestris (Wood tobacco).